The sequence spans 336 residues: Phosphate acyltransferase (336 aa).

This sequence belongs to the PlsX family. In terms of assembly, homodimer. Probably interacts with PlsY.

It is found in the cytoplasm. It carries out the reaction a fatty acyl-[ACP] + phosphate = an acyl phosphate + holo-[ACP]. It participates in lipid metabolism; phospholipid metabolism. Functionally, catalyzes the reversible formation of acyl-phosphate (acyl-PO(4)) from acyl-[acyl-carrier-protein] (acyl-ACP). This enzyme utilizes acyl-ACP as fatty acyl donor, but not acyl-CoA. In Dictyoglomus turgidum (strain DSM 6724 / Z-1310), this protein is Phosphate acyltransferase.